A 410-amino-acid polypeptide reads, in one-letter code: Chlorobenzene dioxygenase, ferredoxin reductase component (410 aa).

4–35 (HVAIIGNGVAGFTTAQALRAEGFEGRISLIGN) is an FAD binding site. 145–173 (RLVIAGGGLIGCEVATTARKLGLAVTILE) contacts NAD(+).

The protein belongs to the bacterial ring-hydroxylating dioxygenase ferredoxin reductase family. This dioxygenase system consists of four proteins: the two subunits of the oxygenase component (TecA1 and TecA2), a ferredoxin (TecA3) and a ferredoxin reductase (TecA4). The cofactor is FAD.

The enzyme catalyses 2 reduced [2Fe-2S]-[ferredoxin] + NAD(+) + H(+) = 2 oxidized [2Fe-2S]-[ferredoxin] + NADH. Its pathway is aromatic compound metabolism. Part of the chlorobenzene dioxygenase system that catalyzes the dihydroxylation of a range of aromatic compounds, including chlorinated benzenes and toluenes, and dinuclear aromatics such as biphenyl and dibenzo-p-dioxin. In Cupriavidus sp. (strain PS12), this protein is Chlorobenzene dioxygenase, ferredoxin reductase component.